A 330-amino-acid polypeptide reads, in one-letter code: Carbonic anhydrase (330 aa).

Positions Met1–Ala109 are chloroplast transit peptide-like.

The protein belongs to the beta-class carbonic anhydrase family.

The protein localises to the cytoplasm. The enzyme catalyses hydrogencarbonate + H(+) = CO2 + H2O. Functionally, reversible hydration of carbon dioxide. The chain is Carbonic anhydrase from Flaveria bidentis (Coastal plain yellowtops).